Consider the following 287-residue polypeptide: Shikimate dehydrogenase (NADP(+)) (287 aa).

Residues 20–22 (SRS) and T67 contribute to the shikimate site. Residue K71 is the Proton acceptor of the active site. Residue E84 coordinates NADP(+). 2 residues coordinate shikimate: N93 and D108. NADP(+)-binding positions include 132–136 (GAGGA), 156–161 (NRTAAR), and M226. Position 228 (Y228) interacts with shikimate. G250 contributes to the NADP(+) binding site.

This sequence belongs to the shikimate dehydrogenase family. In terms of assembly, homodimer.

The enzyme catalyses shikimate + NADP(+) = 3-dehydroshikimate + NADPH + H(+). It participates in metabolic intermediate biosynthesis; chorismate biosynthesis; chorismate from D-erythrose 4-phosphate and phosphoenolpyruvate: step 4/7. Involved in the biosynthesis of the chorismate, which leads to the biosynthesis of aromatic amino acids. Catalyzes the reversible NADPH linked reduction of 3-dehydroshikimate (DHSA) to yield shikimate (SA). The sequence is that of Shikimate dehydrogenase (NADP(+)) from Bordetella bronchiseptica (strain ATCC BAA-588 / NCTC 13252 / RB50) (Alcaligenes bronchisepticus).